Reading from the N-terminus, the 224-residue chain is Large ribosomal subunit protein uL3 (224 aa).

The interval 132-153 (SQTKTHGTHEYQRHPGAIGQRK) is disordered.

It belongs to the universal ribosomal protein uL3 family. In terms of assembly, part of the 50S ribosomal subunit. Forms a cluster with proteins L14 and L19.

One of the primary rRNA binding proteins, it binds directly near the 3'-end of the 23S rRNA, where it nucleates assembly of the 50S subunit. The polypeptide is Large ribosomal subunit protein uL3 (Myxococcus xanthus (strain DK1622)).